The primary structure comprises 547 residues: Probable aquaporin-5 (547 aa).

Positions Met-1–Ser-13 are enriched in polar residues. The segment at Met-1–Arg-208 is disordered. The Cytoplasmic portion of the chain corresponds to Met-1–His-269. The span at Pro-15–Ser-32 shows a compositional bias: low complexity. Basic and acidic residues-rich tracts occupy residues Glu-152 to Thr-169 and Asp-198 to Arg-208. Residues Phe-270–Gly-290 form a helical membrane-spanning segment. Over Thr-291–Ser-316 the chain is Extracellular. Residues Asn-302 and Asn-314 are each glycosylated (N-linked (GlcNAc...) asparagine). Residues Lys-317–Phe-337 form a helical membrane-spanning segment. Residues Arg-338–Ala-363 are Cytoplasmic-facing. Residues Asn-345–Ala-347 carry the NPA 1 motif. Residues Ile-364–Leu-384 traverse the membrane as a helical segment. Topologically, residues Phe-385 to Ser-400 are extracellular. The helical transmembrane segment at Leu-401–Met-421 threads the bilayer. The Cytoplasmic portion of the chain corresponds to Leu-422 to Arg-428. A helical membrane pass occupies residues Ala-429–Val-449. The Extracellular segment spans residues Gln-450 to His-475. An NPA 2 motif is present at residues Asn-457–Ala-459. A helical transmembrane segment spans residues Trp-476–Ile-496. The Cytoplasmic portion of the chain corresponds to Lys-497–Ser-547. Positions Gly-510–Ser-547 are disordered.

It belongs to the MIP/aquaporin (TC 1.A.8) family.

Its subcellular location is the membrane. The catalysed reaction is H2O(in) = H2O(out). Functionally, probable water channel that may have redundant functions with FgAQP3. This is Probable aquaporin-5 from Gibberella zeae (strain ATCC MYA-4620 / CBS 123657 / FGSC 9075 / NRRL 31084 / PH-1) (Wheat head blight fungus).